A 125-amino-acid polypeptide reads, in one-letter code: Small ribosomal subunit protein uS13 (125 aa).

A disordered region spans residues 92 to 125 (RHRRGLPVRGQRTRTNARTRKGKKKTVGAQAKKK).

This sequence belongs to the universal ribosomal protein uS13 family. In terms of assembly, part of the 30S ribosomal subunit. Forms a loose heterodimer with protein S19. Forms two bridges to the 50S subunit in the 70S ribosome.

Functionally, located at the top of the head of the 30S subunit, it contacts several helices of the 16S rRNA. In the 70S ribosome it contacts the 23S rRNA (bridge B1a) and protein L5 of the 50S subunit (bridge B1b), connecting the 2 subunits; these bridges are implicated in subunit movement. Contacts the tRNAs in the A and P-sites. The protein is Small ribosomal subunit protein uS13 of Akkermansia muciniphila (strain ATCC BAA-835 / DSM 22959 / JCM 33894 / BCRC 81048 / CCUG 64013 / CIP 107961 / Muc).